A 498-amino-acid polypeptide reads, in one-letter code: Swainsonine transporter swnT (498 aa).

The segment covering 1-10 (MSLRNDEQTE) has biased composition (basic and acidic residues). The tract at residues 1–21 (MSLRNDEQTEKGAVVGKVDSQ) is disordered. Transmembrane regions (helical) follow at residues 42–64 (LSAI…VLGT), 79–99 (LAMA…ISAI), 126–146 (AMIS…AVPV), 167–187 (FVVF…EYFL), and 193–213 (ALLL…FATA). N-linked (GlcNAc...) asparagine glycans are attached at residues N227 and N242. 6 helical membrane-spanning segments follow: residues 272 to 292 (LIWT…AVLV), 316 to 336 (AAAI…VWSI), 370 to 390 (PIWS…LYLA), 398 to 418 (LIAT…ILVL), 436 to 456 (GFMA…FYCF), and 469 to 489 (YVSA…FLYA).

The protein belongs to the amino acid-polyamine-organocation (APC) superfamily. Amino acid/choline transporter (ACT) (TC 2.A.3.4) family.

It is found in the membrane. Functionally, transmembrane transporter; part of the gene cluster that mediates the biosynthesis of swainsonine, a cytotoxic fungal alkaloid and a potential cancer therapy drug. Does not mediate the secretion of SW and the exact role of swnT in SW biosynthesis remains to be determined. The protein is Swainsonine transporter swnT of Arthroderma benhamiae (strain ATCC MYA-4681 / CBS 112371) (Trichophyton mentagrophytes).